We begin with the raw amino-acid sequence, 607 residues long: UvrABC system protein C (607 aa).

Residues 15-93 (RKPGVYRMLD…IKELKPPYNI (79 aa)) enclose the GIY-YIG domain. Residues 203 to 238 (REVADQLSTDMEAAAAALEFEKAALLRDQLAAIQAV) form the UVR domain. The span at 542 to 551 (HRARRGKARK) shows a compositional bias: basic residues. Residues 542 to 561 (HRARRGKARKQSTLDEIPGI) form a disordered region.

It belongs to the UvrC family. In terms of assembly, interacts with UvrB in an incision complex.

It is found in the cytoplasm. Its function is as follows. The UvrABC repair system catalyzes the recognition and processing of DNA lesions. UvrC both incises the 5' and 3' sides of the lesion. The N-terminal half is responsible for the 3' incision and the C-terminal half is responsible for the 5' incision. This Alcanivorax borkumensis (strain ATCC 700651 / DSM 11573 / NCIMB 13689 / SK2) protein is UvrABC system protein C.